A 371-amino-acid polypeptide reads, in one-letter code: 4-hydroxy-3-methylbut-2-en-1-yl diphosphate synthase (flavodoxin) (371 aa).

C270, C273, C305, and E312 together coordinate [4Fe-4S] cluster.

This sequence belongs to the IspG family. The cofactor is [4Fe-4S] cluster.

It carries out the reaction (2E)-4-hydroxy-3-methylbut-2-enyl diphosphate + oxidized [flavodoxin] + H2O + 2 H(+) = 2-C-methyl-D-erythritol 2,4-cyclic diphosphate + reduced [flavodoxin]. The protein operates within isoprenoid biosynthesis; isopentenyl diphosphate biosynthesis via DXP pathway; isopentenyl diphosphate from 1-deoxy-D-xylulose 5-phosphate: step 5/6. In terms of biological role, converts 2C-methyl-D-erythritol 2,4-cyclodiphosphate (ME-2,4cPP) into 1-hydroxy-2-methyl-2-(E)-butenyl 4-diphosphate. This is 4-hydroxy-3-methylbut-2-en-1-yl diphosphate synthase (flavodoxin) from Shewanella baltica (strain OS223).